Reading from the N-terminus, the 294-residue chain is Probable endonuclease 4 (294 aa).

Zn(2+)-binding residues include histidine 78, histidine 118, glutamate 155, aspartate 189, histidine 192, histidine 226, aspartate 239, histidine 241, and glutamate 271.

This sequence belongs to the AP endonuclease 2 family. The cofactor is Zn(2+).

It catalyses the reaction Endonucleolytic cleavage to 5'-phosphooligonucleotide end-products.. Its function is as follows. Endonuclease IV plays a role in DNA repair. It cleaves phosphodiester bonds at apurinic or apyrimidinic (AP) sites, generating a 3'-hydroxyl group and a 5'-terminal sugar phosphate. This Oleidesulfovibrio alaskensis (strain ATCC BAA-1058 / DSM 17464 / G20) (Desulfovibrio alaskensis) protein is Probable endonuclease 4.